A 305-amino-acid chain; its full sequence is tRNA pseudouridine synthase B (305 aa).

Residue Asp-39 is the Nucleophile of the active site.

The protein belongs to the pseudouridine synthase TruB family. Type 1 subfamily.

The enzyme catalyses uridine(55) in tRNA = pseudouridine(55) in tRNA. Its function is as follows. Responsible for synthesis of pseudouridine from uracil-55 in the psi GC loop of transfer RNAs. This chain is tRNA pseudouridine synthase B, found in Staphylococcus aureus (strain bovine RF122 / ET3-1).